Reading from the N-terminus, the 734-residue chain is Predicted GPI-anchored protein 49 (734 aa).

Positions 1–16 (MNYITSLLLLSSNTFL) are cleaved as a signal peptide. Residues Asn27, Asn56, Asn68, and Asn71 are each glycosylated (N-linked (GlcNAc...) asparagine). A disordered region spans residues 78–145 (DNSDTDIDDS…NESDTQNEND (68 aa)). Positions 87-98 (SSSNSEDVSSND) are enriched in low complexity. N-linked (GlcNAc...) asparagine glycosylation is found at Asn105, Asn118, Asn136, and Asn180. Acidic residues predominate over residues 110–129 (FSDESDEGNDSDDNGDEVEN). The segment covering 130 to 141 (MENNQANESDTQ) has biased composition (polar residues). 2 disordered regions span residues 216–262 (SPKS…LKSK) and 331–360 (DANP…RLPT). The span at 228–259 (SRKKTLKSKSKSKSSKLKHKSRKSHKRRPKLL) shows a compositional bias: basic residues. N-linked (GlcNAc...) asparagine glycans are attached at residues Asn388 and Asn427. The disordered stretch occupies residues 447–479 (PPRYSNHHSEFTVERPPRPSRTKKRPRIKAKKT). Basic and acidic residues predominate over residues 453-463 (HHSEFTVERPP). A compositionally biased stretch (basic residues) spans 464–479 (RPSRTKKRPRIKAKKT). N-linked (GlcNAc...) asparagine glycosylation is present at Asn517. The tract at residues 582 to 653 (KPQETKLHSP…STTSTKPNDQ (72 aa)) is disordered. Over residues 592–611 (TSTDTKSSKLMSSSSSNNNK) the composition is skewed to low complexity. Residues 620–631 (EYNQTQESTSYN) are compositionally biased toward polar residues. N-linked (GlcNAc...) asparagine glycosylation is found at Asn622 and Asn631. Low complexity predominate over residues 632–650 (TTKAVPKTSVVSSTTSTKP). Ser707 is lipidated: GPI-anchor amidated serine. The propeptide at 708–734 (ASQNLSFSVLGLIILLLLLPGLLIIIM) is removed in mature form. Residue Asn711 is glycosylated (N-linked (GlcNAc...) asparagine).

Its subcellular location is the cell membrane. The protein is Predicted GPI-anchored protein 49 (PGA49) of Candida albicans (strain SC5314 / ATCC MYA-2876) (Yeast).